The primary structure comprises 417 residues: Ankyrin repeat and SAM domain-containing protein 4B (417 aa).

The interval 1–252 is mediates localization to microvilli; sequence MSTRYHQAAS…SGDFKEKLQL (252 aa). ANK repeat units follow at residues 31–60, 64–93, and 97–126; these read DGMTPTLLAAYHGNLEALEIICSRGGDPDR, WGNTPLHFAASNGHAHCVSFLVNFGANIFA, and DLQTPLDAAASREQNECVALLDKAATAQNI. Positions 130-164 form a coiled coil; that stretch reads KKVTRLKEQAQKNARRQIKECERLQEKHQNKMAHT. The tract at residues 151 to 195 is disordered; the sequence is ERLQEKHQNKMAHTYSKEESGTLSSSKGTFSRSSPSNASAPGTFG. Residues 171–190 are compositionally biased toward polar residues; sequence GTLSSSKGTFSRSSPSNASA. The segment at 253-346 is mediates interaction with MYO7B; sequence SAEEDGSVHH…EWEEDVVDAT (94 aa). Ser283 is subject to Phosphoserine. A disordered region spans residues 305 to 330; it reads RQGASEADEGAADEEGEENGLKDDLP. Residues 310–322 show a composition bias toward acidic residues; that stretch reads EADEGAADEEGEE. The 53-residue stretch at 351-403 folds into the SAM domain; sequence FLLSQHLEEFLPIFKREQIDLEALLLCSDEDLQSIQMQLGPRKKVLNAINRRK. Positions 415 to 417 match the PDZ-binding; mediates interaction with USH1C motif; it reads TSL.

Part of the IMAC/intermicrovillar adhesion complex/intermicrovillar tip-link complex composed of ANKS4B, MYO7B, USH1C, CDHR2 and CDHR5. Interacts with USH1C; the interaction is direct and is required for ANKS4B localization to the tip of microvilli. Interacts with MYO7B; the interaction is direct. May interact with HSPA5. In terms of tissue distribution, expressed in kidney and small intestine.

Its subcellular location is the cell projection. The protein resides in the microvillus. As part of the intermicrovillar adhesion complex/IMAC plays a role in epithelial brush border differentiation, controlling microvilli organization and length. Plays a role in assembly of the complex. May play a role in cellular response to endoplasmic reticulum stress. The polypeptide is Ankyrin repeat and SAM domain-containing protein 4B (Homo sapiens (Human)).